The following is a 513-amino-acid chain: MPRFALLSVSDKTGLVDFARQLVDRFQFQIVSSGGTAKQLLEAGIPVTKVAEHTGSPEILGGRVKTLHPRIHGGILARRDREEDQADLAANNIQPFDLVVVNLYPFEATIARPEVTLADAIEQIDIGGPAMVRASAKNHAHLTILTNPSQYEPYLTALADGEGQIPLAFRQQCALAAFQHTAAYDAAIATYLAEQFEATSDRLQLSAQPVQVLRYGENPHQAATWYQTGATASGWAAAQQLQGKELSYNNLVDLEAARQIIAEFPADGPAAAAILKHNNPCGVATAEALSDAYQKAFDADSVSAFGGIVALNRAIDAATATAMTGTFLECIVAPSVEPAAAEILAAKKNLRVLTLADFNSGPQQTVRSIAGGFLVQDSDDQLETVDAWQVVTEQQPSEADWQELLFAWKVVKHVKSNAIAVTANGVTLGIGAGQMNRVGSVKIALEQAGDRAQGAILASDGFFPFDDSVRTAAAAGIRAIVQPGGSLRDADSIAAANELGLVMVFTGTRHFLH.

Residues 1–146 (MPRFALLSVS…KNHAHLTILT (146 aa)) enclose the MGS-like domain.

This sequence belongs to the PurH family.

The catalysed reaction is (6R)-10-formyltetrahydrofolate + 5-amino-1-(5-phospho-beta-D-ribosyl)imidazole-4-carboxamide = 5-formamido-1-(5-phospho-D-ribosyl)imidazole-4-carboxamide + (6S)-5,6,7,8-tetrahydrofolate. It carries out the reaction IMP + H2O = 5-formamido-1-(5-phospho-D-ribosyl)imidazole-4-carboxamide. It functions in the pathway purine metabolism; IMP biosynthesis via de novo pathway; 5-formamido-1-(5-phospho-D-ribosyl)imidazole-4-carboxamide from 5-amino-1-(5-phospho-D-ribosyl)imidazole-4-carboxamide (10-formyl THF route): step 1/1. The protein operates within purine metabolism; IMP biosynthesis via de novo pathway; IMP from 5-formamido-1-(5-phospho-D-ribosyl)imidazole-4-carboxamide: step 1/1. This chain is Bifunctional purine biosynthesis protein PurH, found in Synechococcus elongatus (strain ATCC 33912 / PCC 7942 / FACHB-805) (Anacystis nidulans R2).